The primary structure comprises 206 residues: Transmembrane emp24 domain-containing protein bai (206 aa).

A signal peptide spans 1–20 (MMKAILATLAIFGCIWPGQS). Residues 21 to 172 (VMFHLTPNTQ…RDTNEKTNSR (152 aa)) are Lumenal-facing. Positions 30–140 (QKCLKEDIQA…LKPLEVDLKR (111 aa)) constitute a GOLD domain. A helical membrane pass occupies residues 173–193 (VLFFSIFSMCCLLGLATWQVL). Over 194–206 (YLRRYFKAKKLIE) the chain is Cytoplasmic.

Belongs to the EMP24/GP25L family.

The protein localises to the membrane. Functionally, eca and bai are essential, though not redundant, for dorsoventral patterning of the embryo. Specifically required during early embryogenesis for the activity of maternal tkv, while the zygotic tkv is not affected. The sequence is that of Transmembrane emp24 domain-containing protein bai from Drosophila willistoni (Fruit fly).